A 338-amino-acid chain; its full sequence is Hydroxyproline O-galactosyltransferase HPGT1 (338 aa).

The Cytoplasmic segment spans residues 1-12; sequence MARKGSSIRLSS. A helical; Signal-anchor for type II membrane protein membrane pass occupies residues 13–32; that stretch reads SRISTLLLFMFATFASFYVA. Residues 33–338 are Lumenal-facing; sequence GRLWQESQTR…WSSEAICAGV (306 aa).

This sequence belongs to the glycosyltransferase 31 family. The cofactor is Mn(2+). As to expression, expressed in roots, rosette leaves, cauline leaves, stems, flowers and siliques.

Its subcellular location is the golgi apparatus membrane. The protein operates within protein modification; protein glycosylation. Functionally, possesses hydroxyproline O-galactosyltransferase activity. Transfers galactose from UDP-galactose to hydroxyproline residues in the arabinogalactan proteins (AGPs). Is specific for AGPs containing non-contiguous peptidyl hydroxyproline residues. The addition of galactose onto the peptidyl hydroxyproline residues in AGP core proteins represents the first committed step in arabinogalactan polysaccharide addition. AGP glycans play essential roles in both vegetative and reproductive plant growth. The chain is Hydroxyproline O-galactosyltransferase HPGT1 from Arabidopsis thaliana (Mouse-ear cress).